Here is a 449-residue protein sequence, read N- to C-terminus: Bifunctional F420 biosynthesis protein FbiB (449 aa).

Residues 1-245 are coenzyme F420:L-glutamate ligase; sequence MSPAGEHGTA…PGTEDLFWLG (245 aa). GTP is bound by residues 21–24, Ser51, and Lys56; that span reads LPEF. Asp110 contributes to the a divalent metal cation binding site. Asn113 is a binding site for GTP. Residues Asp151 and Thr152 each coordinate a divalent metal cation. The dehydro-coenzyme F420-0 reductase stretch occupies residues 246-449; that stretch reads TAEAIELGRR…ADPGDLLIRK (204 aa). FMN contacts are provided by residues 261-265 and Ala289; that span reads RRSVR. A coenzyme F420-(gamma-Glu)n-binding site is contributed by Asp321. The FMN site is built by Gly400 and Arg437.

It in the N-terminal section; belongs to the CofE family. Mg(2+) serves as cofactor. It depends on Mn(2+) as a cofactor. The cofactor is K(+).

It catalyses the reaction oxidized coenzyme F420-0 + GTP + L-glutamate = oxidized coenzyme F420-1 + GDP + phosphate + H(+). It carries out the reaction oxidized coenzyme F420-1 + GTP + L-glutamate = oxidized coenzyme F420-2 + GDP + phosphate + H(+). The catalysed reaction is oxidized coenzyme F420-(gamma-L-Glu)(n) + GTP + L-glutamate = oxidized coenzyme F420-(gamma-L-Glu)(n+1) + GDP + phosphate + H(+). The enzyme catalyses oxidized coenzyme F420-0 + FMN + H(+) = dehydro coenzyme F420-0 + FMNH2. It participates in cofactor biosynthesis; coenzyme F420 biosynthesis. In terms of biological role, bifunctional enzyme that catalyzes the GTP-dependent successive addition of multiple gamma-linked L-glutamates to the L-lactyl phosphodiester of 7,8-didemethyl-8-hydroxy-5-deazariboflavin (F420-0) to form polyglutamated F420 derivatives, and the FMNH2-dependent reduction of dehydro-F420-0 to form F420-0. The polypeptide is Bifunctional F420 biosynthesis protein FbiB (Mycobacterium avium (strain 104)).